A 260-amino-acid chain; its full sequence is Lys-63-specific deubiquitinase BRCC36 (260 aa).

The MPN domain occupies 6–149; the sequence is VHLESDAFLV…YTCFQSVQAQ (144 aa). 3 residues coordinate Zn(2+): His92, His94, and Asp105. The short motif at 92–105 is the JAMM motif element; the sequence is HSHPHITVWPSHVD.

It belongs to the peptidase M67A family. BRCC36 subfamily. As to quaternary structure, component of the BRCA1-A complex, at least composed of brca1, bard1, uimc1/rap80, abraxas1, brcc3/brcc36, babam2 and babam1/nba1. In the BRCA1-A complex, interacts directly with abraxas1 and babam2. Component of the BRISC complex, at least composed of abraxas2, brcc3/brcc36, babam2 and babam1/nba1. Within the complex, interacts directly with abraxas2. Both the BRCA1-A complex and the BRISC complex bind polyubiquitin. The cofactor is Zn(2+).

It is found in the nucleus. It localises to the cytoplasm. The protein localises to the cytoskeleton. Its subcellular location is the spindle pole. Its function is as follows. Metalloprotease that specifically cleaves 'Lys-63'-linked polyubiquitin chains. Does not have activity toward 'Lys-48'-linked polyubiquitin chains. Component of the BRCA1-A complex, a complex that specifically recognizes 'Lys-63'-linked ubiquitinated histones H2A and H2AX at DNA lesions sites, leading to target the brca1-bard1 heterodimer to sites of DNA damage at double-strand breaks (DSBs). In the BRCA1-A complex, it specifically removes 'Lys-63'-linked ubiquitin on histones H2A and H2AX, antagonizing the rnf8-dependent ubiquitination at double-strand breaks (DSBs). Catalytic subunit of the BRISC complex, a multiprotein complex that specifically cleaves 'Lys-63'-linked ubiquitin in various substrates. Mediates the specific 'Lys-63'-specific deubiquitination associated with the COP9 signalosome complex (CSN), via the interaction of the BRISC complex with the CSN complex. The BRISC complex is required for normal mitotic spindle assembly and microtubule attachment to kinetochores via its role in deubiquitinating numa1. Plays a role in interferon signaling via its role in the deubiquitination of the interferon receptor ifnar1; deubiquitination increases ifnar1 activity by enhancing its stability and cell surface expression. Acts as a regulator of the NLRP3 inflammasome by mediating deubiquitination of nlrp3. Down-regulates the response to bacterial lipopolysaccharide (LPS) via its role in ifnar1 deubiquitination. The chain is Lys-63-specific deubiquitinase BRCC36 (brcc3) from Salmo salar (Atlantic salmon).